The chain runs to 264 residues: TLC domain-containing protein 2 (264 aa).

6 helical membrane-spanning segments follow: residues 3-23 (PTGL…HWGL), 42-62 (LCVS…GLSL), 77-97 (WALV…ADLL), 114-134 (VVVS…FSMV), 169-189 (SLAT…LWLF), and 199-219 (LVTL…ILGI). Residues 34-227 (RDRWQWWNLC…GIRILVNDVL (194 aa)) form the TLC domain. Positions 230–264 (RPHPPSPGHEKTRGTRTRRDNGPVTSNSSTLSLKD) are disordered. Residues 237-250 (GHEKTRGTRTRRDN) are compositionally biased toward basic and acidic residues. Polar residues predominate over residues 252 to 264 (PVTSNSSTLSLKD).

This sequence belongs to the TLCD family.

The protein resides in the cell membrane. Its function is as follows. Regulates the composition and fluidity of the plasma membrane. Inhibits the incorporation of membrane-fluidizing phospholipids containing omega-3 long-chain polyunsaturated fatty acids (LCPUFA) and thereby promotes membrane rigidity. Does not appear to have any effect on LCPUFA synthesis. This chain is TLC domain-containing protein 2 (TLCD2), found in Homo sapiens (Human).